The following is a 172-amino-acid chain: MSKENEVLLNEDIRAREVRCVGDDGTVYGVVSRDEALKIAEKQGLDLVLVAPDAKPPVCKIMDYGKFRYQQEKKQKEAKKKQKVIEIKEIKLSIKIAQNDINYKVKHAVEFLQDGKHVKFRVFLKGREMSTPEAGVAMLEKVWELVKDVADRDKEPLVEGRYVNMLVTPKKG.

The protein belongs to the IF-3 family. In terms of assembly, monomer.

The protein resides in the cytoplasm. Its function is as follows. IF-3 binds to the 30S ribosomal subunit and shifts the equilibrium between 70S ribosomes and their 50S and 30S subunits in favor of the free subunits, thus enhancing the availability of 30S subunits on which protein synthesis initiation begins. In Campylobacter curvus (strain 525.92), this protein is Translation initiation factor IF-3.